A 742-amino-acid chain; its full sequence is Protein-lysine N-methyltransferase SMYD4 (742 aa).

110–112 serves as a coordination point for S-adenosyl-L-methionine; it reads RSA. The 340-residue stretch at 230 to 569 folds into the SET domain; that stretch reads SSLSLNFSTE…SGQEIFHCYG (340 aa). Positions 295, 298, 308, 311, 317, 321, 330, and 334 each coordinate Zn(2+). The MYND-type zinc finger occupies 295–334; the sequence is CHHCLKQLLASIPCCGCSYAKYCSQNCADVAWEQYHRTEC. S-adenosyl-L-methionine-binding positions include asparagine 418, 534–535, and tyrosine 568; that span reads NH.

Belongs to the class V-like SAM-binding methyltransferase superfamily.

Its subcellular location is the nucleus. It localises to the cytoplasm. It catalyses the reaction L-lysyl-[protein] + S-adenosyl-L-methionine = N(6)-methyl-L-lysyl-[protein] + S-adenosyl-L-homocysteine + H(+). Functionally, protein-lysine N-methyltransferase. Monomethylates PRMT5, modulating its transcriptional activity. May also act as a histone methyltransferase. Plays a critical role in cardiac development. Acts as a key epigenetic regulator of gene expression during cardiac development via its dual activities as a methyltransferase and negative regulator of HDAC1. This is Protein-lysine N-methyltransferase SMYD4 (SMYD4) from Gallus gallus (Chicken).